The primary structure comprises 470 residues: Tubulin gamma chain (470 aa).

144–150 (AGGTGSG) provides a ligand contact to GTP.

It belongs to the tubulin family.

The protein resides in the cytoplasm. It is found in the cytoskeleton. Its subcellular location is the microtubule organizing center. The protein localises to the spindle pole body. Its function is as follows. Tubulin is the major constituent of microtubules. The gamma chain is found at microtubule organizing centers (MTOC) such as the spindle poles or the centrosome, suggesting that it is involved in the minus-end nucleation of microtubule assembly. This Eremothecium gossypii (strain ATCC 10895 / CBS 109.51 / FGSC 9923 / NRRL Y-1056) (Yeast) protein is Tubulin gamma chain (TUB4).